Reading from the N-terminus, the 477-residue chain is Cysteine--tRNA ligase (477 aa).

Cys29 is a Zn(2+) binding site. Residues 31-41 carry the 'HIGH' region motif; sequence PTVYNYFHVGN. Zn(2+) is bound by residues Cys209, His234, and Glu238. A 'KMSKS' region motif is present at residues 267-271; sequence KMSKS. Lys270 is an ATP binding site.

The protein belongs to the class-I aminoacyl-tRNA synthetase family. Monomer. Requires Zn(2+) as cofactor.

The protein resides in the cytoplasm. The catalysed reaction is tRNA(Cys) + L-cysteine + ATP = L-cysteinyl-tRNA(Cys) + AMP + diphosphate. This is Cysteine--tRNA ligase from Desulfitobacterium hafniense (strain DSM 10664 / DCB-2).